The chain runs to 1211 residues: Sterol 3-beta-glucosyltransferase (1211 aa).

Positions 1–10 are enriched in basic and acidic residues; sequence MSQLRPRDSS. The disordered stretch occupies residues 1–61; the sequence is MSQLRPRDSS…DETEAEDDID (61 aa). The GRAM 1 domain occupies 196-235; sequence EKLKTTFDLSDDDEFVNDYPCWLLHEVFLQGHIYITSRYL. The PH domain maps to 248–347; sequence VTMSGALSIR…WVTDLRKHIF (100 aa). 2 disordered regions span residues 422-452 and 500-531; these read LTDS…KLSR and VVPN…PSNW. The segment covering 423-432 has biased composition (acidic residues); sequence TDSDSSESDS. Over residues 507-525 the composition is skewed to basic and acidic residues; the sequence is SELKQDHAGDAPKDSEEPS. Residues 586 to 652 form the GRAM 2 domain; sequence SRFRKHFSLP…SDIENVYNLK (67 aa). UDP-alpha-D-glucose-binding residues include S770, R771, D773, N1046, N1072, V1073, H1075, H1088, S1091, G1092, T1093, D1112, and Q1113.

This sequence belongs to the glycosyltransferase 28 family.

It localises to the cytoplasm. Its subcellular location is the preautophagosomal structure membrane. It catalyses the reaction a sterol + UDP-alpha-D-glucose = a sterol 3-beta-D-glucoside + UDP + H(+). The enzyme catalyses ergosterol + UDP-alpha-D-glucose = ergosteryl 3-beta-D-glucoside + UDP + H(+). In terms of biological role, sterol glycosyltransferase responsible for the glycosylation of ergosterol to form ergosterol-glucoside. Shows also activity in vitro on other sterols such as cholesterol, beta-sitosterol, stigmasterol and tomatidine. Probable sterol 3-beta-glucosyltransferase that mediates autophagic degradation of peroxisomes (pexophagy). This chain is Sterol 3-beta-glucosyltransferase, found in Komagataella phaffii (strain GS115 / ATCC 20864) (Yeast).